The sequence spans 400 residues: Subtilisin-like protease 7 (400 aa).

The first 20 residues, 1-20 (MGFITKAIPLALAAASVING), serve as a signal peptide directing secretion. The propeptide occupies 21-119 (AEIMETRAGV…IERDARVQIN (99 aa)). One can recognise an Inhibitor I9 domain in the interval 36–118 (KYIVVMNDGM…YIERDARVQI (83 aa)). N-linked (GlcNAc...) asparagine glycosylation is present at asparagine 58. One can recognise a Peptidase S8 domain in the interval 129–400 (SWGLARVGSK…SKLINNGSGM (272 aa)). Residues aspartate 161 and histidine 192 each act as charge relay system in the active site. Residues asparagine 222 and asparagine 252 are each glycosylated (N-linked (GlcNAc...) asparagine). Serine 346 functions as the Charge relay system in the catalytic mechanism. A glycan (N-linked (GlcNAc...) asparagine) is linked at asparagine 396.

This sequence belongs to the peptidase S8 family.

Its subcellular location is the secreted. In terms of biological role, secreted subtilisin-like serine protease with keratinolytic activity that contributes to pathogenicity. This chain is Subtilisin-like protease 7 (SUB7), found in Arthroderma benhamiae (Trichophyton mentagrophytes).